The chain runs to 333 residues: Glycerol-3-phosphate dehydrogenase [NAD(P)+] (333 aa).

NADPH is bound by residues S10, W11, H31, R32, and K105. The sn-glycerol 3-phosphate site is built by K105, G136, and S138. A140 contributes to the NADPH binding site. K191, D244, S254, R255, and N256 together coordinate sn-glycerol 3-phosphate. K191 (proton acceptor) is an active-site residue. R255 is an NADPH binding site. Residues I279 and E281 each coordinate NADPH.

This sequence belongs to the NAD-dependent glycerol-3-phosphate dehydrogenase family.

The protein resides in the cytoplasm. The enzyme catalyses sn-glycerol 3-phosphate + NAD(+) = dihydroxyacetone phosphate + NADH + H(+). It carries out the reaction sn-glycerol 3-phosphate + NADP(+) = dihydroxyacetone phosphate + NADPH + H(+). Its pathway is membrane lipid metabolism; glycerophospholipid metabolism. Its function is as follows. Catalyzes the reduction of the glycolytic intermediate dihydroxyacetone phosphate (DHAP) to sn-glycerol 3-phosphate (G3P), the key precursor for phospholipid synthesis. The protein is Glycerol-3-phosphate dehydrogenase [NAD(P)+] of Chlorobium chlorochromatii (strain CaD3).